We begin with the raw amino-acid sequence, 492 residues long: Fascin-2 (492 aa).

The protein belongs to the fascin family. Exclusively expressed in the eye, specifically in photoreceptor cells.

It localises to the cytoplasm. The protein resides in the cytoskeleton. Its subcellular location is the cell projection. It is found in the stereocilium. In terms of biological role, acts as an actin bundling protein. May play a pivotal role in photoreceptor cell-specific events, such as disk morphogenesis. The chain is Fascin-2 (FSCN2) from Bos taurus (Bovine).